A 400-amino-acid chain; its full sequence is Argininosuccinate synthase (400 aa).

Residue 8–16 (AYSGGLDTS) participates in ATP binding. L-citrulline-binding residues include Tyr-87 and Ser-92. Position 117 (Gly-117) interacts with ATP. L-aspartate-binding residues include Thr-119, Asn-123, and Asp-124. Position 123 (Asn-123) interacts with L-citrulline. L-citrulline is bound by residues Arg-127, Ser-175, Glu-259, and Tyr-271.

Belongs to the argininosuccinate synthase family. Type 1 subfamily. As to quaternary structure, homotetramer.

The protein resides in the cytoplasm. It carries out the reaction L-citrulline + L-aspartate + ATP = 2-(N(omega)-L-arginino)succinate + AMP + diphosphate + H(+). The protein operates within amino-acid biosynthesis; L-arginine biosynthesis; L-arginine from L-ornithine and carbamoyl phosphate: step 2/3. This Parafrankia sp. (strain EAN1pec) protein is Argininosuccinate synthase.